The primary structure comprises 269 residues: Carbohydrate metabolism regulator TYE7 (269 aa).

The tract at residues 146-178 is disordered; the sequence is QPKIKQEPGTKAATKPKRRAPRKKLTESQKKAH. Residues 159–168 show a composition bias toward basic residues; sequence TKPKRRAPRK. Positions 169 to 178 are enriched in basic and acidic residues; that stretch reads KLTESQKKAH. In terms of domain architecture, bHLH spans 173–244; it reads SQKKAHNKIE…EKATEYILHL (72 aa).

As to quaternary structure, efficient DNA binding requires dimerization with another bHLH protein.

The protein localises to the nucleus. In terms of biological role, key transcriptional regulator of carbohydrate metabolism. Binds the promoter sequences of the glycolytic genes at the CANNTG motif and activates their expression during growth on either fermentable or non-fermentable carbon sources as well as under hypoxic growth conditions. Complete glycolytic activation by GAL4 and TYE7 is required for full virulence. Involved in biofilm formation and negatively regulates hyphal formation under hypoxia. Also controls the expression of the copper transport protein CTR1. This chain is Carbohydrate metabolism regulator TYE7 (TYE7), found in Candida albicans (strain SC5314 / ATCC MYA-2876) (Yeast).